A 171-amino-acid chain; its full sequence is Lipoprotein signal peptidase (171 aa).

Transmembrane regions (helical) follow at residues 8–28, 64–84, and 99–119; these read SFLW…YIVV, WQQY…VYFL, and ALII…GFVV. Active-site residues include aspartate 120 and aspartate 138. The helical transmembrane segment at 133–153 threads the bilayer; that stretch reads VFNIADIAICIGAGLLALDAF.

This sequence belongs to the peptidase A8 family.

Its subcellular location is the cell inner membrane. The catalysed reaction is Release of signal peptides from bacterial membrane prolipoproteins. Hydrolyzes -Xaa-Yaa-Zaa-|-(S,diacylglyceryl)Cys-, in which Xaa is hydrophobic (preferably Leu), and Yaa (Ala or Ser) and Zaa (Gly or Ala) have small, neutral side chains.. It participates in protein modification; lipoprotein biosynthesis (signal peptide cleavage). In terms of biological role, this protein specifically catalyzes the removal of signal peptides from prolipoproteins. The polypeptide is Lipoprotein signal peptidase (Haemophilus influenzae (strain PittGG)).